We begin with the raw amino-acid sequence, 229 residues long: Protein FAM3C (229 aa).

The first 24 residues, 1–24, serve as a signal peptide directing secretion; sequence MRIAGAIKFVVAVALFLLTFYVIS. Disulfide bonds link C59–C87 and C65–C222. Positions 68–226 constitute a GG-type lectin domain; that stretch reads KHFAFKIASG…VEMEGCIPQK (159 aa).

Belongs to the FAM3 family. As to expression, expressed in the retinal ganglion cell layer.

Its subcellular location is the secreted. Functionally, involved in retinal laminar formation. In Xenopus laevis (African clawed frog), this protein is Protein FAM3C (fam3c).